Consider the following 582-residue polypeptide: 2-succinyl-5-enolpyruvyl-6-hydroxy-3-cyclohexene-1-carboxylate synthase (582 aa).

The protein belongs to the TPP enzyme family. MenD subfamily. In terms of assembly, homodimer. It depends on Mg(2+) as a cofactor. Mn(2+) serves as cofactor. Thiamine diphosphate is required as a cofactor.

The catalysed reaction is isochorismate + 2-oxoglutarate + H(+) = 5-enolpyruvoyl-6-hydroxy-2-succinyl-cyclohex-3-ene-1-carboxylate + CO2. Its pathway is quinol/quinone metabolism; 1,4-dihydroxy-2-naphthoate biosynthesis; 1,4-dihydroxy-2-naphthoate from chorismate: step 2/7. The protein operates within cofactor biosynthesis; phylloquinone biosynthesis. Functionally, catalyzes the thiamine diphosphate-dependent decarboxylation of 2-oxoglutarate and the subsequent addition of the resulting succinic semialdehyde-thiamine pyrophosphate anion to isochorismate to yield 2-succinyl-5-enolpyruvyl-6-hydroxy-3-cyclohexene-1-carboxylate (SEPHCHC). The polypeptide is 2-succinyl-5-enolpyruvyl-6-hydroxy-3-cyclohexene-1-carboxylate synthase (Trichodesmium erythraeum (strain IMS101)).